The chain runs to 309 residues: Homoserine O-succinyltransferase (309 aa).

The active-site Acyl-thioester intermediate is Cys142. Substrate contacts are provided by Lys163 and Ser192. His235 acts as the Proton acceptor in catalysis. Glu237 is an active-site residue. Arg249 serves as a coordination point for substrate.

It belongs to the MetA family.

It localises to the cytoplasm. It catalyses the reaction L-homoserine + succinyl-CoA = O-succinyl-L-homoserine + CoA. It participates in amino-acid biosynthesis; L-methionine biosynthesis via de novo pathway; O-succinyl-L-homoserine from L-homoserine: step 1/1. In terms of biological role, transfers a succinyl group from succinyl-CoA to L-homoserine, forming succinyl-L-homoserine. This is Homoserine O-succinyltransferase from Proteus mirabilis (strain HI4320).